The following is a 66-amino-acid chain: Toxin Boma6b (66 aa).

The 63-residue stretch at 2–64 (RDAYIAQNYN…VPIKVEGKCH (63 aa)) folds into the LCN-type CS-alpha/beta domain. 4 cysteine pairs are disulfide-bonded: Cys12–Cys63, Cys16–Cys36, Cys22–Cys46, and Cys26–Cys48.

Belongs to the long (4 C-C) scorpion toxin superfamily. Sodium channel inhibitor family. Alpha subfamily. Expressed by the venom gland.

It is found in the secreted. Alpha toxins bind voltage-independently at site-3 of sodium channels (Nav) and inhibit the inactivation of the activated channels, thereby blocking neuronal transmission. The sequence is that of Toxin Boma6b from Buthus occitanus mardochei (Moroccan scorpion).